A 23-amino-acid polypeptide reads, in one-letter code: Testis ecdysiotropin peptide B (23 aa).

Functionally, stimulates synthesis of ecdysteroid in the testes of larvae and pupae. This chain is Testis ecdysiotropin peptide B, found in Lymantria dispar (Gypsy moth).